The following is a 200-amino-acid chain: Glycerol-3-phosphate acyltransferase (200 aa).

5 consecutive transmembrane segments (helical) span residues 2–22 (FNIP…AVIV), 51–71 (KAAA…VLLA), 84–104 (AIAA…FFGF), 114–134 (LGVL…IWLV), and 158–178 (LFFM…ILVL).

This sequence belongs to the PlsY family. Probably interacts with PlsX.

It is found in the cell inner membrane. It carries out the reaction an acyl phosphate + sn-glycerol 3-phosphate = a 1-acyl-sn-glycero-3-phosphate + phosphate. The protein operates within lipid metabolism; phospholipid metabolism. In terms of biological role, catalyzes the transfer of an acyl group from acyl-phosphate (acyl-PO(4)) to glycerol-3-phosphate (G3P) to form lysophosphatidic acid (LPA). This enzyme utilizes acyl-phosphate as fatty acyl donor, but not acyl-CoA or acyl-ACP. The polypeptide is Glycerol-3-phosphate acyltransferase (Neisseria meningitidis serogroup A / serotype 4A (strain DSM 15465 / Z2491)).